The sequence spans 95 residues: Protein TusB (95 aa).

The protein belongs to the DsrH/TusB family. Heterohexamer, formed by a dimer of trimers. The hexameric TusBCD complex contains 2 copies each of TusB, TusC and TusD. The TusBCD complex interacts with TusE.

It localises to the cytoplasm. Its function is as follows. Part of a sulfur-relay system required for 2-thiolation of 5-methylaminomethyl-2-thiouridine (mnm(5)s(2)U) at tRNA wobble positions. The sequence is that of Protein TusB from Enterobacter sp. (strain 638).